The primary structure comprises 452 residues: Maltoporin (452 aa).

A signal peptide spans 1 to 25; sequence MMITLRKLPLAVAVAAGVMSAQAMA.

This sequence belongs to the porin LamB (TC 1.B.3) family. Homotrimer formed of three 18-stranded antiparallel beta-barrels, containing three independent channels.

The protein resides in the cell outer membrane. It catalyses the reaction beta-maltose(in) = beta-maltose(out). In terms of biological role, involved in the transport of maltose and maltodextrins. This is Maltoporin from Salmonella agona (strain SL483).